The primary structure comprises 248 residues: Proteasome subunit alpha type-7 (248 aa).

A glycan (O-linked (GlcNAc) serine) is linked at S130. A Phosphotyrosine modification is found at Y153. At K227 the chain carries N6-acetyllysine.

This sequence belongs to the peptidase T1A family. As to quaternary structure, the 26S proteasome consists of a 20S proteasome core and two 19S regulatory subunits. The 20S proteasome core is a barrel-shaped complex made of 28 subunits that are arranged in four stacked rings. The two outer rings are each formed by seven alpha subunits, and the two inner rings are formed by seven beta subunits. The proteolytic activity is exerted by three beta-subunits PSMB5, PSMB6 and PSMB7. PSMA7 interacts directly with the PSMG1-PSMG2 heterodimer which promotes 20S proteasome assembly. Interacts with HIF1A. Interacts with RAB7A. Interacts with PRKN. Interacts with ABL1 and ABL2. Interacts with EMAP2. Interacts with MAVS.

The protein localises to the cytoplasm. Its subcellular location is the nucleus. In terms of biological role, component of the 20S core proteasome complex involved in the proteolytic degradation of most intracellular proteins. This complex plays numerous essential roles within the cell by associating with different regulatory particles. Associated with two 19S regulatory particles, forms the 26S proteasome and thus participates in the ATP-dependent degradation of ubiquitinated proteins. The 26S proteasome plays a key role in the maintenance of protein homeostasis by removing misfolded or damaged proteins that could impair cellular functions, and by removing proteins whose functions are no longer required. Associated with the PA200 or PA28, the 20S proteasome mediates ubiquitin-independent protein degradation. This type of proteolysis is required in several pathways including spermatogenesis (20S-PA200 complex) or generation of a subset of MHC class I-presented antigenic peptides (20S-PA28 complex). Inhibits the transactivation function of HIF-1A under both normoxic and hypoxia-mimicking conditions. The interaction with EMAP2 increases the proteasome-mediated HIF-1A degradation under the hypoxic conditions. Plays a role in hepatitis C virus internal ribosome entry site-mediated translation. Mediates nuclear translocation of the androgen receptor (AR) and thereby enhances androgen-mediated transactivation. Promotes MAVS degradation and thereby negatively regulates MAVS-mediated innate immune response. The protein is Proteasome subunit alpha type-7 (PSMA7) of Bos taurus (Bovine).